The chain runs to 181 residues: Inner membrane-spanning protein YciB (181 aa).

The next 5 helical transmembrane spans lie at 10-30 (LVIFFAVYKFFDIYIASGALI), 50-70 (MHLITFAMVTVFGTLTLVFHD), 72-92 (AFIKWKVTIIYALFALALGVS), 118-138 (VTWYWVSFFAICGLVNIYVAF), and 148-168 (FKVFGLTALTLINTVITVFYL).

The protein belongs to the YciB family.

The protein resides in the cell inner membrane. Plays a role in cell envelope biogenesis, maintenance of cell envelope integrity and membrane homeostasis. The sequence is that of Inner membrane-spanning protein YciB from Shewanella oneidensis (strain ATCC 700550 / JCM 31522 / CIP 106686 / LMG 19005 / NCIMB 14063 / MR-1).